The sequence spans 418 residues: Serine/threonine-protein kinase Sgk1 (418 aa).

A disordered region spans residues 50 to 78 (PQEPELLNENSSPPPSPSQQINLGPSSNP). Over residues 68-78 (QQINLGPSSNP) the composition is skewed to polar residues. A Protein kinase domain is found at 85–342 (FQFLKIIGKG…FMEIKNHMFF (258 aa)). ATP-binding positions include 91-99 (IGKGSFGKV) and Lys114. The active-site Proton acceptor is Asp209. The region spanning 343 to 418 (SPINWDDLIN…SYAPPMESYL (76 aa)) is the AGC-kinase C-terminal domain.

It belongs to the protein kinase superfamily. AGC Ser/Thr protein kinase family.

It is found in the cytoplasm. It localises to the nucleus. The protein resides in the endoplasmic reticulum. The catalysed reaction is L-seryl-[protein] + ATP = O-phospho-L-seryl-[protein] + ADP + H(+). It catalyses the reaction L-threonyl-[protein] + ATP = O-phospho-L-threonyl-[protein] + ADP + H(+). Its function is as follows. Protein kinase that may play an important role in cellular stress response. Plays an important role in activating certain potassium, sodium, and chloride channels, suggesting an involvement in the regulation of processes such as cell survival, neuronal excitability, and renal sodium excretion. This chain is Serine/threonine-protein kinase Sgk1 (sgk1), found in Xenopus tropicalis (Western clawed frog).